We begin with the raw amino-acid sequence, 274 residues long: Thiamine kinase (274 aa).

This sequence belongs to the thiamine kinase family.

It carries out the reaction thiamine + ATP = thiamine phosphate + ADP + H(+). It participates in cofactor biosynthesis; thiamine diphosphate biosynthesis; thiamine phosphate from thiamine: step 1/1. Functionally, catalyzes the ATP-dependent phosphorylation of thiamine to thiamine phosphate. Is involved in thiamine salvage. The chain is Thiamine kinase from Escherichia coli O9:H4 (strain HS).